We begin with the raw amino-acid sequence, 300 residues long: Ornithine carbamoyltransferase (300 aa).

Carbamoyl phosphate-binding positions include serine 49–threonine 52, glutamine 76, arginine 100, and histidine 127–glutamine 130. L-ornithine is bound by residues asparagine 158, aspartate 218, and serine 222–methionine 223. Carbamoyl phosphate-binding positions include cysteine 258–leucine 259 and arginine 286.

This sequence belongs to the aspartate/ornithine carbamoyltransferase superfamily. OTCase family.

It is found in the cytoplasm. It carries out the reaction carbamoyl phosphate + L-ornithine = L-citrulline + phosphate + H(+). The protein operates within amino-acid biosynthesis; L-arginine biosynthesis; L-arginine from L-ornithine and carbamoyl phosphate: step 1/3. Reversibly catalyzes the transfer of the carbamoyl group from carbamoyl phosphate (CP) to the N(epsilon) atom of ornithine (ORN) to produce L-citrulline. The protein is Ornithine carbamoyltransferase of Nitratidesulfovibrio vulgaris (strain ATCC 29579 / DSM 644 / CCUG 34227 / NCIMB 8303 / VKM B-1760 / Hildenborough) (Desulfovibrio vulgaris).